A 308-amino-acid chain; its full sequence is Transmembrane and ubiquitin-like domain-containing protein 1 (308 aa).

The helical transmembrane segment at Val-11–Thr-31 threads the bilayer. The segment at Thr-39–Ser-162 is disordered. Residues Pro-63–Gly-93 are compositionally biased toward polar residues. Positions Ser-103–Val-115 are enriched in low complexity. Polar residues predominate over residues Pro-132 to Leu-149. The Ubiquitin-like domain maps to Ile-169–Ser-242. A run of 2 helical transmembrane segments spans residues Val-253–Trp-273 and Phe-283–Phe-303.

It is found in the membrane. It localises to the cytoplasm. The protein resides in the nucleus. May contribute to the regulation of translation during cell-cycle progression. May contribute to the regulation of cell proliferation. The membrane form is involved in sterol-regulated ubiquitination and degradation of HMG-CoA reductase HMGCR. May be involved in centrosome assembly. This is Transmembrane and ubiquitin-like domain-containing protein 1 (tmub1) from Xenopus laevis (African clawed frog).